The sequence spans 375 residues: Dual specificity protein phosphatase 4 (375 aa).

The 119-residue stretch at S25–A143 folds into the Rhodanese domain. A Tyrosine-protein phosphatase domain is found at G176–A317. C261 functions as the Phosphocysteine intermediate in the catalytic mechanism.

The protein belongs to the protein-tyrosine phosphatase family. Non-receptor class dual specificity subfamily.

It localises to the nucleus. The catalysed reaction is O-phospho-L-tyrosyl-[protein] + H2O = L-tyrosyl-[protein] + phosphate. It catalyses the reaction O-phospho-L-seryl-[protein] + H2O = L-seryl-[protein] + phosphate. It carries out the reaction O-phospho-L-threonyl-[protein] + H2O = L-threonyl-[protein] + phosphate. Regulates mitogenic signal transduction by dephosphorylating both Thr and Tyr residues on MAP kinases ERK1 and ERK2. This is Dual specificity protein phosphatase 4 (DUSP4) from Gallus gallus (Chicken).